Consider the following 369-residue polypeptide: Molybdenum import ATP-binding protein ModC (369 aa).

Residues 3–246 (TRPEQASKDT…LDLPLAHGDS (244 aa)) form the ABC transporter domain. 44-51 (GPSGSGKT) lines the ATP pocket. A Mop domain is found at 305-369 (DTSILNILPA…AQIKGVAILG (65 aa)).

The protein belongs to the ABC transporter superfamily. Molybdate importer (TC 3.A.1.8) family. The complex is composed of two ATP-binding proteins (ModC), two transmembrane proteins (ModB) and a solute-binding protein (ModA).

It localises to the cell inner membrane. The enzyme catalyses molybdate(out) + ATP + H2O = molybdate(in) + ADP + phosphate + H(+). In terms of biological role, part of the ABC transporter complex ModABC involved in molybdenum import. Responsible for energy coupling to the transport system. In Albidiferax ferrireducens (strain ATCC BAA-621 / DSM 15236 / T118) (Rhodoferax ferrireducens), this protein is Molybdenum import ATP-binding protein ModC.